Consider the following 190-residue polypeptide: Probable nicotinate-nucleotide adenylyltransferase (190 aa).

Belongs to the NadD family.

It catalyses the reaction nicotinate beta-D-ribonucleotide + ATP + H(+) = deamido-NAD(+) + diphosphate. It participates in cofactor biosynthesis; NAD(+) biosynthesis; deamido-NAD(+) from nicotinate D-ribonucleotide: step 1/1. Its function is as follows. Catalyzes the reversible adenylation of nicotinate mononucleotide (NaMN) to nicotinic acid adenine dinucleotide (NaAD). In Azobacteroides pseudotrichonymphae genomovar. CFP2, this protein is Probable nicotinate-nucleotide adenylyltransferase.